A 309-amino-acid polypeptide reads, in one-letter code: HPr kinase/phosphorylase (309 aa).

Catalysis depends on residues histidine 138 and lysine 159. 153–160 (GKSGIGKS) serves as a coordination point for ATP. Serine 160 serves as a coordination point for Mg(2+). Residue aspartate 177 is the Proton acceptor; for phosphorylation activity. Proton donor; for dephosphorylation activity of the active site. Positions 201-210 (IEVRGIGILD) are important for the catalytic mechanism of both phosphorylation and dephosphorylation. Glutamate 202 provides a ligand contact to Mg(2+). Arginine 243 is a catalytic residue. Positions 264–269 (PIKPAR) are important for the catalytic mechanism of dephosphorylation.

Belongs to the HPrK/P family. Homohexamer. It depends on Mg(2+) as a cofactor.

The enzyme catalyses [HPr protein]-L-serine + ATP = [HPr protein]-O-phospho-L-serine + ADP + H(+). The catalysed reaction is [HPr protein]-O-phospho-L-serine + phosphate + H(+) = [HPr protein]-L-serine + diphosphate. Catalyzes the ATP- as well as the pyrophosphate-dependent phosphorylation of a specific serine residue in HPr, a phosphocarrier protein of the phosphoenolpyruvate-dependent sugar phosphotransferase system (PTS). HprK/P also catalyzes the pyrophosphate-producing, inorganic phosphate-dependent dephosphorylation (phosphorolysis) of seryl-phosphorylated HPr (P-Ser-HPr). The two antagonistic activities of HprK/P are regulated by several intracellular metabolites, which change their concentration in response to the absence or presence of rapidly metabolisable carbon sources (glucose, fructose, etc.) in the growth medium. Therefore, by controlling the phosphorylation state of HPr, HPrK/P is a sensor enzyme that plays a major role in the regulation of carbon metabolism and sugar transport: it mediates carbon catabolite repression (CCR), and regulates PTS-catalyzed carbohydrate uptake and inducer exclusion. The protein is HPr kinase/phosphorylase of Alkaliphilus metalliredigens (strain QYMF).